A 502-amino-acid chain; its full sequence is tRNA-specific adenosine deaminase 1 (502 aa).

Residues S63–F501 enclose the A to I editase domain. Position 87 (H87) interacts with Zn(2+). The active-site Proton donor is E89. The 1D-myo-inositol hexakisphosphate site is built by R93 and R94. A Zn(2+)-binding site is contributed by C142. Residues S174–T194 form a disordered region. S191 carries the phosphoserine modification. A Zn(2+)-binding site is contributed by C299. 4 residues coordinate 1D-myo-inositol hexakisphosphate: K302, R305, K435, and K470.

Belongs to the ADAT1 family. 1D-myo-inositol hexakisphosphate serves as cofactor. Ubiquitously expressed.

The enzyme catalyses adenosine(37) in tRNA(Ala) + H2O + H(+) = inosine(37) in tRNA(Ala) + NH4(+). Specifically deaminates adenosine-37 to inosine in tRNA-Ala. In Homo sapiens (Human), this protein is tRNA-specific adenosine deaminase 1 (ADAT1).